Reading from the N-terminus, the 146-residue chain is MKKLLLVNGPNLNRLGVREVNVYGKGTLATLEVDMKQEAETMGVELECFQSNHEGAIIDIIHEAEDIYKGIILNPGAFTHYSYAIRDAIASISIPVIEVHISNIHQRESFRHESVTAAVCAGQIVGFGFYGYKLALFALMEKLREA.

Tyr-23 serves as the catalytic Proton acceptor. Residues Asn-74, His-80, and Asp-87 each coordinate substrate. His-100 acts as the Proton donor in catalysis. Residues 101-102 (IS) and Arg-111 contribute to the substrate site.

Belongs to the type-II 3-dehydroquinase family. In terms of assembly, homododecamer.

The catalysed reaction is 3-dehydroquinate = 3-dehydroshikimate + H2O. Its pathway is metabolic intermediate biosynthesis; chorismate biosynthesis; chorismate from D-erythrose 4-phosphate and phosphoenolpyruvate: step 3/7. Catalyzes a trans-dehydration via an enolate intermediate. This is 3-dehydroquinate dehydratase from Bacillus cereus (strain B4264).